The sequence spans 226 residues: UPF0173 metal-dependent hydrolase GFO_2312 (226 aa).

It belongs to the UPF0173 family.

This chain is UPF0173 metal-dependent hydrolase GFO_2312, found in Christiangramia forsetii (strain DSM 17595 / CGMCC 1.15422 / KT0803) (Gramella forsetii).